The sequence spans 389 residues: Aspartic protease 6 (389 aa).

An N-terminal signal peptide occupies residues 1–15 (MKTFILLAVLGLASA). The Peptidase A1 domain occupies 71–384 (YLGNITIGTP…DIGNKRMGFA (314 aa)). The N-linked (GlcNAc...) asparagine glycan is linked to asparagine 74. Aspartate 89 is a catalytic residue. Cysteine 102 and cysteine 106 are disulfide-bonded. The active site involves aspartate 277. A disulfide bond links cysteine 312 and cysteine 344.

Belongs to the peptidase A1 family. Glycosylated. Has phosphorylcholine-substituted oligosaccharide N-glycans. Expressed in intestine, muscles, pharynx and hypodermis.

The protein localises to the secreted. Functionally, aspartic protease. This chain is Aspartic protease 6, found in Caenorhabditis elegans.